The sequence spans 607 residues: Terpenoid synthase 9 (607 aa).

Residues Asp-356, Asp-360, Asn-501, and Asp-509 each coordinate Mg(2+). The DDXXD motif signature appears at 356-360 (DDTFD).

This sequence belongs to the terpene synthase family. Tpsa subfamily. Mg(2+) is required as a cofactor. Requires Mn(2+) as cofactor. In terms of tissue distribution, predominantly expressed in roots but also in stems, leaves and flowers.

The protein resides in the cytoplasm. It functions in the pathway secondary metabolite biosynthesis; terpenoid biosynthesis. In terms of biological role, involved in terpene biosynthesis in roots. Possesses diterpene (C20) synthase activity in vitro. Does not seem to be involved in sesquiterpene (C15) biosynthesis. This is Terpenoid synthase 9 from Arabidopsis thaliana (Mouse-ear cress).